The chain runs to 106 residues: Large ribosomal subunit protein eL42 (106 aa).

It belongs to the eukaryotic ribosomal protein eL42 family.

The sequence is that of Large ribosomal subunit protein eL42 (RPL44) from Kluyveromyces marxianus (Yeast).